The following is a 562-amino-acid chain: NAD-dependent malic enzyme (562 aa).

Y101 (proton donor) is an active-site residue. R154 contacts NAD(+). The Proton acceptor role is filled by K172. Positions 243, 244, and 267 each coordinate a divalent metal cation. NAD(+) is bound by residues D267 and N415.

The protein belongs to the malic enzymes family. Homotetramer. Mg(2+) serves as cofactor. It depends on Mn(2+) as a cofactor.

The catalysed reaction is (S)-malate + NAD(+) = pyruvate + CO2 + NADH. It catalyses the reaction oxaloacetate + H(+) = pyruvate + CO2. This chain is NAD-dependent malic enzyme, found in Colwellia psychrerythraea (strain 34H / ATCC BAA-681) (Vibrio psychroerythus).